The sequence spans 474 residues: Glycogen synthase (474 aa).

Lys15 lines the ADP-alpha-D-glucose pocket.

The protein belongs to the glycosyltransferase 1 family. Bacterial/plant glycogen synthase subfamily.

The enzyme catalyses [(1-&gt;4)-alpha-D-glucosyl](n) + ADP-alpha-D-glucose = [(1-&gt;4)-alpha-D-glucosyl](n+1) + ADP + H(+). It participates in glycan biosynthesis; glycogen biosynthesis. In terms of biological role, synthesizes alpha-1,4-glucan chains using ADP-glucose. The polypeptide is Glycogen synthase (Finegoldia magna (strain ATCC 29328 / DSM 20472 / WAL 2508) (Peptostreptococcus magnus)).